Consider the following 458-residue polypeptide: Cysteine--tRNA ligase (458 aa).

Cys-28 is a Zn(2+) binding site. The 'HIGH' region motif lies at 30 to 40; it reads VTVYDLCHFGH. 3 residues coordinate Zn(2+): Cys-209, His-234, and Glu-238. A 'KMSKS' region motif is present at residues 266 to 270; that stretch reads KMSKS. Lys-269 contributes to the ATP binding site.

This sequence belongs to the class-I aminoacyl-tRNA synthetase family. Monomer. It depends on Zn(2+) as a cofactor.

It localises to the cytoplasm. It catalyses the reaction tRNA(Cys) + L-cysteine + ATP = L-cysteinyl-tRNA(Cys) + AMP + diphosphate. The protein is Cysteine--tRNA ligase of Mannheimia succiniciproducens (strain KCTC 0769BP / MBEL55E).